The following is a 506-amino-acid chain: Cobyric acid synthase (506 aa).

The GATase cobBQ-type domain maps to Asp-254 to Phe-453. Cys-334 (nucleophile) is an active-site residue. His-445 is a catalytic residue.

It belongs to the CobB/CobQ family. CobQ subfamily.

Its pathway is cofactor biosynthesis; adenosylcobalamin biosynthesis. Catalyzes amidations at positions B, D, E, and G on adenosylcobyrinic A,C-diamide. NH(2) groups are provided by glutamine, and one molecule of ATP is hydrogenolyzed for each amidation. This is Cobyric acid synthase from Dehalococcoides mccartyi (strain ATCC BAA-2266 / KCTC 15142 / 195) (Dehalococcoides ethenogenes (strain 195)).